Consider the following 677-residue polypeptide: Pro-neuregulin-1, membrane-bound isoform (677 aa).

Residues 1 to 12 (MAEKKKVKEGKG) show a composition bias toward basic and acidic residues. Disordered stretches follow at residues 1–43 (MAEK…KEIK) and 78–106 (GAKNKPDSKPEHIKIRGKKKSSELQISKA). The Extracellular segment spans residues 1–260 (MAEKKKVKEG…MEAEELYQKR (260 aa)). Residues 13–24 (RKGKGKKDRKGK) are compositionally biased toward basic residues. The 96-residue stretch at 37–132 (PKLKEIKTQS…GNDTVTVNVT (96 aa)) folds into the Ig-like C2-type domain. A disulfide bond links C57 and C116. Positions 78–91 (GAKNKPDSKPEHIK) are enriched in basic and acidic residues. 2 N-linked (GlcNAc...) asparagine glycosylation sites follow: N124 and N130. Residues 188-232 (HLIKCSDKEKTYCVNGGECYVLNGITSSNQFMCKCKPGFTGARCT) form the EGF-like domain. Intrachain disulfides connect C192–C206, C200–C220, and C222–C231. The chain crosses the membrane as a helical span at residues 261-280 (VLTITGICIDLLVVGDMCVV). The Cytoplasmic portion of the chain corresponds to 281–677 (DAYCKTKKQR…RKMTCKTLFI (397 aa)). Basic and acidic residues predominate over residues 294–315 (NDRLRQSLRERNKNITNKDNRP). 5 disordered regions span residues 294-326 (NDRLRQSLRERNKNITNKDNRPHNPKNPPPRKN), 350-375 (ETSFSTSHYTSTTHHSTTVTQTPSHS), 397-418 (SVENSRHTSPTGPRGRLNGIGG), 457-479 (VEFKTPISPKSPCLETSPPESSL), and 503-617 (PPRL…FLSI). Over residues 351-375 (TSFSTSHYTSTTHHSTTVTQTPSHS) the composition is skewed to low complexity. The span at 397-407 (SVENSRHTSPT) shows a compositional bias: polar residues. Residues 505-515 (RLREKRYDRKT) are compositionally biased toward basic and acidic residues. The span at 568-578 (VNSRRQKRTKP) shows a compositional bias: basic residues. Residues 591 to 600 (DSSSESSTSE) show a composition bias toward low complexity.

The protein belongs to the neuregulin family. Post-translationally, proteolytic cleavage close to the plasma membrane on the external face leads to the release of the soluble growth factor form. In terms of processing, extensive glycosylation precedes the proteolytic cleavage. In terms of tissue distribution, isoform alpha1 is expressed in brain and muscle. Isoform CRD is expressed in brain and spinal cord, but at very low level in muscle.

Its subcellular location is the cell membrane. The protein localises to the secreted. Functionally, direct ligand for the ERBB tyrosine kinase receptors. Induces expression of acetylcholine receptor in synaptic nuclei. This Xenopus laevis (African clawed frog) protein is Pro-neuregulin-1, membrane-bound isoform (nrg1).